We begin with the raw amino-acid sequence, 284 residues long: 2,3,4,5-tetrahydropyridine-2,6-dicarboxylate N-succinyltransferase (284 aa).

Residues arginine 111 and aspartate 148 each contribute to the substrate site.

This sequence belongs to the transferase hexapeptide repeat family. In terms of assembly, homotrimer.

It is found in the cytoplasm. The catalysed reaction is (S)-2,3,4,5-tetrahydrodipicolinate + succinyl-CoA + H2O = (S)-2-succinylamino-6-oxoheptanedioate + CoA. The protein operates within amino-acid biosynthesis; L-lysine biosynthesis via DAP pathway; LL-2,6-diaminopimelate from (S)-tetrahydrodipicolinate (succinylase route): step 1/3. The sequence is that of 2,3,4,5-tetrahydropyridine-2,6-dicarboxylate N-succinyltransferase from Brucella suis (strain ATCC 23445 / NCTC 10510).